Reading from the N-terminus, the 128-residue chain is Gas vesicle protein O (128 aa).

Residues 1-49 (MANTPEDTQNTQNDSQNDSQNDSQKDTSARATSARAHQQPQEQPPSPMR) form a disordered region. Residues 7–22 (DTQNTQNDSQNDSQND) show a composition bias toward low complexity. Positions 29-41 (ARATSARAHQQPQ) are enriched in polar residues.

This sequence belongs to the gas vesicle GvpO family.

It is found in the gas vesicle. Its function is as follows. A minor component of the gas vesicle. May play a role in transcription and/or RNA stability and in GV assembly. Gas vesicles are hollow, gas filled proteinaceous nanostructures found in some microorganisms. It is not clear what function gas vesicles perform in soil bacteria. The protein is Gas vesicle protein O of Streptomyces sp. (strain CB03234).